Here is a 354-residue protein sequence, read N- to C-terminus: Histidinol-phosphate aminotransferase 1 (354 aa).

N6-(pyridoxal phosphate)lysine is present on Lys209.

Belongs to the class-II pyridoxal-phosphate-dependent aminotransferase family. Histidinol-phosphate aminotransferase subfamily. As to quaternary structure, homodimer. It depends on pyridoxal 5'-phosphate as a cofactor.

The catalysed reaction is L-histidinol phosphate + 2-oxoglutarate = 3-(imidazol-4-yl)-2-oxopropyl phosphate + L-glutamate. It functions in the pathway amino-acid biosynthesis; L-histidine biosynthesis; L-histidine from 5-phospho-alpha-D-ribose 1-diphosphate: step 7/9. The sequence is that of Histidinol-phosphate aminotransferase 1 (hisC1) from Oceanobacillus iheyensis (strain DSM 14371 / CIP 107618 / JCM 11309 / KCTC 3954 / HTE831).